Reading from the N-terminus, the 96-residue chain is Prokineticin Bm8-a (96 aa).

Positions 1–19 (MKCFAQIVVLLLVIAFSHG) are cleaved as a signal peptide. Cystine bridges form between Cys26–Cys38, Cys32–Cys50, Cys37–Cys78, Cys60–Cys86, and Cys80–Cys95.

This sequence belongs to the AVIT (prokineticin) family. As to expression, expressed by the skin glands.

Its subcellular location is the secreted. Its function is as follows. Potent agonist for both PKR1/PROKR1 and PKR2/PROKR2, and inducer of a potent and long-lasting hyperalgesia. Also potentiates capsaicin-induced TRPV1 current, when tested on DRG neurons. At subnanomolar concentrations, this protein both induces potent chemotaxis of macrophages and stimulates LPS-induced production of the pro-inflammatory cytokines IL-1 and IL-12. In vivo, potently stimulates the contraction of the guinea-pig gastrointestinal (GI) smooth muscle (nanomolar concentration). The protein is Prokineticin Bm8-a of Bombina maxima (Giant fire-bellied toad).